The primary structure comprises 861 residues: MKKDVTPMMRQYLSIKNKHKDAILFFRVGSFYEMFFDDALEGSKLLGLTLTKREDIPMCGVPCHTSKEYIKKLILLDRKVAICEQGGVQTDPKGPLEREVVEVISPGVVVDEDFLQDDVNNYLVAISDYKDYYSFSYIDLSTSRLGIILYEGSFLEKLRRDIEKYSPKEIIVSESFYYKYLEKLALDRFLVNKVPHWHLDKDIAIKSLKDHFNVLSLSAFGFKEDEPYYISSFLIIDYIKNNLKNLLINIDTIYINSDSEYMFLDDVTQINLELVKNNNDLTARYSLYSVLNDCKTPMGKRLLREYILNPLLDIAAINNRLDHVEFLNNNVNLSIKLREILSNVWDIERIISRLQMRKYAKKDFLFIRETLIAFFSVKRLLNEYSFNYWIFDVNDEGDIRGIYSLIDCAISNEQDELIKQGYNSEIDRLRELKNNASKYVDDYLDFERNFSKINSLKIKRINVRGLFFEVTKSYYGQVPSHFIESQTLNSVKRYKTNKLIELERDINDAEDNLLSLEQEIFDEIALKVVKYSTVIKKVAEFCAYIDVVSNFAYLAKKNEYVRPTLTNNKEIILECARHPVVEHYMKGVEAFTRNSVRIDGEKYFCLITGPNMAGKSTYLRQTALVVLMGHIGSFVPANKAIIGITDKIFCRIGASDNISKGESTFLVEMNETANILRNATQDSLIIMDEVGRGTSTNDGLAIACSIVEYILEDIKARSLFATHFHELSAINHDSFVNLSMKIERQGNELIFLREVEEKPSLNSYGIYVARIAGIPLKVIKRANIILKSLTSRENLCVSEFFTSATSVVNDGEDTMEEDLSYELDLNAYLELKNLISKIDINNITPFQAMNLLSEIILKTKM.

609 to 616 lines the ATP pocket; the sequence is GPNMAGKS.

This sequence belongs to the DNA mismatch repair MutS family.

Its function is as follows. This protein is involved in the repair of mismatches in DNA. It is possible that it carries out the mismatch recognition step. This protein has a weak ATPase activity. The chain is DNA mismatch repair protein MutS from Borrelia hermsii (strain HS1 / DAH).